The sequence spans 282 residues: 3-oxoadipate CoA-transferase subunit A (282 aa).

It belongs to the 3-oxoacid CoA-transferase subunit A family. As to quaternary structure, heterotetramer composed of 2 A and 2 B subunits.

The catalysed reaction is 3-oxoadipate + succinyl-CoA = 3-oxoadipyl-CoA + succinate. The protein operates within aromatic compound metabolism; beta-ketoadipate pathway; acetyl-CoA and succinyl-CoA from 3-oxoadipate: step 1/2. Functionally, catalyzes the CoA transfer from succinate to 3-oxoadipate (beta-ketoadipate). This chain is 3-oxoadipate CoA-transferase subunit A (catI), found in Pseudomonas knackmussii (strain DSM 6978 / CCUG 54928 / LMG 23759 / B13).